The primary structure comprises 158 residues: NAD(P)H-quinone oxidoreductase subunit J, chloroplastic (158 aa).

Belongs to the complex I 30 kDa subunit family. In terms of assembly, NDH is composed of at least 16 different subunits, 5 of which are encoded in the nucleus.

The protein resides in the plastid. The protein localises to the chloroplast thylakoid membrane. It carries out the reaction a plastoquinone + NADH + (n+1) H(+)(in) = a plastoquinol + NAD(+) + n H(+)(out). It catalyses the reaction a plastoquinone + NADPH + (n+1) H(+)(in) = a plastoquinol + NADP(+) + n H(+)(out). In terms of biological role, NDH shuttles electrons from NAD(P)H:plastoquinone, via FMN and iron-sulfur (Fe-S) centers, to quinones in the photosynthetic chain and possibly in a chloroplast respiratory chain. The immediate electron acceptor for the enzyme in this species is believed to be plastoquinone. Couples the redox reaction to proton translocation, and thus conserves the redox energy in a proton gradient. The chain is NAD(P)H-quinone oxidoreductase subunit J, chloroplastic from Illicium oligandrum (Star anise).